Reading from the N-terminus, the 134-residue chain is ATP synthase epsilon chain, chloroplastic (134 aa).

It belongs to the ATPase epsilon chain family. F-type ATPases have 2 components, CF(1) - the catalytic core - and CF(0) - the membrane proton channel. CF(1) has five subunits: alpha(3), beta(3), gamma(1), delta(1), epsilon(1). CF(0) has three main subunits: a, b and c.

The protein localises to the plastid. It is found in the chloroplast thylakoid membrane. Its function is as follows. Produces ATP from ADP in the presence of a proton gradient across the membrane. The polypeptide is ATP synthase epsilon chain, chloroplastic (Pelargonium hortorum (Common geranium)).